Here is a 497-residue protein sequence, read N- to C-terminus: Glycerol kinase (497 aa).

Position 12 (Thr-12) interacts with ADP. 3 residues coordinate ATP: Thr-12, Thr-13, and Ser-14. Thr-12 provides a ligand contact to sn-glycerol 3-phosphate. Arg-16 contacts ADP. Arg-82, Glu-83, Tyr-134, and Asp-243 together coordinate sn-glycerol 3-phosphate. Residues Arg-82, Glu-83, Tyr-134, Asp-243, and Gln-244 each contribute to the glycerol site. 2 residues coordinate ADP: Thr-265 and Gly-308. 4 residues coordinate ATP: Thr-265, Gly-308, Gln-312, and Gly-411. Position 411 (Gly-411) interacts with ADP.

It belongs to the FGGY kinase family.

The catalysed reaction is glycerol + ATP = sn-glycerol 3-phosphate + ADP + H(+). The protein operates within polyol metabolism; glycerol degradation via glycerol kinase pathway; sn-glycerol 3-phosphate from glycerol: step 1/1. Its activity is regulated as follows. Inhibited by fructose 1,6-bisphosphate (FBP). Its function is as follows. Key enzyme in the regulation of glycerol uptake and metabolism. Catalyzes the phosphorylation of glycerol to yield sn-glycerol 3-phosphate. This is Glycerol kinase from Sinorhizobium fredii (strain NBRC 101917 / NGR234).